The chain runs to 201 residues: MARYTGPATRKSRRLRVDLVGGDMAFERRPYPPGQAGRARIKESEYLLQLQEKQKARFIYGVMEKQFRRYYAEANRRAGKTGENLVVLLESRLDNVVYRAGLANTRRQARQLVSHGHFTVNGKAIDVPSFRVSQYDIINVREKSQKMNWFEEAQDNLVDAVVPAWLQVVPENLRILVHQLPERAQIDIPLQEQLIVEFYSK.

In terms of domain architecture, S4 RNA-binding spans 91–151; the sequence is SRLDNVVYRA…EKSQKMNWFE (61 aa).

This sequence belongs to the universal ribosomal protein uS4 family. Part of the 30S ribosomal subunit. Contacts protein S5. The interaction surface between S4 and S5 is involved in control of translational fidelity.

One of the primary rRNA binding proteins, it binds directly to 16S rRNA where it nucleates assembly of the body of the 30S subunit. Functionally, with S5 and S12 plays an important role in translational accuracy. This Corynebacterium glutamicum (strain R) protein is Small ribosomal subunit protein uS4.